We begin with the raw amino-acid sequence, 106 residues long: MNNERIYQVLKGPVFSEKAQVLGDTAGVQVFKVDINATKLEIKKAVEKLFGVEVVKVNTTITKGKTKRFGRTLGRRSDVKKAYVTLKAGQDVEMADLGDTAESAAE.

Belongs to the universal ribosomal protein uL23 family. As to quaternary structure, part of the 50S ribosomal subunit. Contacts protein L29, and trigger factor when it is bound to the ribosome.

One of the early assembly proteins it binds 23S rRNA. One of the proteins that surrounds the polypeptide exit tunnel on the outside of the ribosome. Forms the main docking site for trigger factor binding to the ribosome. This chain is Large ribosomal subunit protein uL23, found in Acinetobacter baumannii (strain AB307-0294).